The following is a 283-amino-acid chain: DegV domain-containing protein lin2658 (283 aa).

The region spanning 5–282 (IAVVTDSTTY…EGALGLTWSI (278 aa)) is the DegV domain. Residues Ser-63 and Ser-96 each contribute to the hexadecanoate site.

May bind long-chain fatty acids, such as palmitate, and may play a role in lipid transport or fatty acid metabolism. This chain is DegV domain-containing protein lin2658, found in Listeria innocua serovar 6a (strain ATCC BAA-680 / CLIP 11262).